A 348-amino-acid chain; its full sequence is D-alanine--D-alanine ligase (348 aa).

One can recognise an ATP-grasp domain in the interval 132–334 (KRILEVAGVP…YSDIIKELVV (203 aa)). Residue 162-217 (LEKLTFPVFVKPANMGSSVGISKAENESELRSAIDLALKYDSRILIEQGVVAREIE) participates in ATP binding. D288, E301, and N303 together coordinate Mg(2+).

This sequence belongs to the D-alanine--D-alanine ligase family. Mg(2+) serves as cofactor. It depends on Mn(2+) as a cofactor.

It is found in the cytoplasm. The catalysed reaction is 2 D-alanine + ATP = D-alanyl-D-alanine + ADP + phosphate + H(+). Its pathway is cell wall biogenesis; peptidoglycan biosynthesis. In terms of biological role, cell wall formation. In Streptococcus thermophilus (strain CNRZ 1066), this protein is D-alanine--D-alanine ligase.